The sequence spans 75 residues: Large ribosomal subunit protein bL31 (75 aa).

As to quaternary structure, part of the 50S ribosomal subunit.

Its function is as follows. Binds the 23S rRNA. This chain is Large ribosomal subunit protein bL31, found in Rhodopseudomonas palustris (strain ATCC BAA-98 / CGA009).